The chain runs to 61 residues: Metallothionein-1 (61 aa).

M1 is modified (N-acetylmethionine). Residues 1–29 (MDPNCSCSTGSTCTCSSSCGCKDCKCTSC) are beta. A divalent metal cation-binding residues include C5, C7, C13, C15, C19, C21, C24, C26, C29, C33, C34, C36, C37, C41, C44, C48, C50, C57, C59, and C60. The alpha stretch occupies residues 30–61 (KKSCCSCCPVGCSKCAQGCVCKGASDKCTCCA).

This sequence belongs to the metallothionein superfamily. Type 1 family.

In terms of biological role, metallothioneins have a high content of cysteine residues that bind various heavy metals; these proteins are transcriptionally regulated by both heavy metals and glucocorticoids. In Cricetulus griseus (Chinese hamster), this protein is Metallothionein-1 (MT1).